We begin with the raw amino-acid sequence, 542 residues long: Chaperonin GroEL 4 (542 aa).

ATP is bound by residues 30–33 (TLGP), Lys-51, 87–91 (DGTTT), Gly-415, and Asp-496.

This sequence belongs to the chaperonin (HSP60) family. Forms a cylinder of 14 subunits composed of two heptameric rings stacked back-to-back. Interacts with the co-chaperonin GroES.

The protein localises to the cytoplasm. It carries out the reaction ATP + H2O + a folded polypeptide = ADP + phosphate + an unfolded polypeptide.. Together with its co-chaperonin GroES, plays an essential role in assisting protein folding. The GroEL-GroES system forms a nano-cage that allows encapsulation of the non-native substrate proteins and provides a physical environment optimized to promote and accelerate protein folding. The polypeptide is Chaperonin GroEL 4 (Rhizobium etli (strain ATCC 51251 / DSM 11541 / JCM 21823 / NBRC 15573 / CFN 42)).